Reading from the N-terminus, the 101-residue chain is Small ribosomal subunit protein uS14A (101 aa).

Residues 29–60 are disordered; it reads EIIRSPRSTPEQRTAAQNELAHQPRDASAVRV. A compositionally biased stretch (polar residues) spans 34-45; the sequence is PRSTPEQRTAAQ.

This sequence belongs to the universal ribosomal protein uS14 family. Part of the 30S ribosomal subunit. Contacts proteins S3 and S10.

Binds 16S rRNA, required for the assembly of 30S particles and may also be responsible for determining the conformation of the 16S rRNA at the A site. This is Small ribosomal subunit protein uS14A from Mycolicibacterium paratuberculosis (strain ATCC BAA-968 / K-10) (Mycobacterium paratuberculosis).